The sequence spans 416 residues: Major royal jelly protein 8 (416 aa).

The N-terminal stretch at 1–16 (MIRWLLLMYLGITCQG) is a signal peptide. 8 N-linked (GlcNAc...) asparagine glycosylation sites follow: Asn24, Asn58, Asn93, Asn115, Asn158, Asn175, Asn196, and Asn215.

The protein belongs to the major royal jelly protein family. Expressed at very low levels in the hypopharyngeal glands of worker honey bees (at protein level). Secreted into bee venom in the sting apparatus (at protein level). Expressed in the spermatheca of adult queen bees (at protein level); expression levels are higher in mated queens than in virgin queens. Along with Mrjp9 expressed at very low levels in the head of worker bees compared to other major royal jelly proteins.

The protein localises to the secreted. Its function is as follows. Component of bee sting venom. Component of royal jelly, a substance produced in the hypopharyngeal gland containing proteins, free amino acids, fatty acids, sugars and other nutrients, which is fed to developing larvae by worker nurse bees; may be present only at trace levels. All larvae are fed some royal jelly (also known as worker jelly) early in their development but it forms the principal source of nutrition for larvae destined to become queen bees. Produced in the spermatheca of adult queen bees, along with other major royal jelly proteins, where it may act as a nutrient supply for sperm stored by mated queens, or be involved in energy metabolism. This Apis mellifera (Honeybee) protein is Major royal jelly protein 8.